The following is a 285-amino-acid chain: Protease HtpX homolog (285 aa).

2 consecutive transmembrane segments (helical) span residues 7–27 (TAML…MIGG) and 30–50 (GMTI…WFSD). Zn(2+) is bound at residue histidine 131. Glutamate 132 is a catalytic residue. Residue histidine 135 participates in Zn(2+) binding. Transmembrane regions (helical) follow at residues 146–166 (ITAT…FFGG) and 177–197 (IAGI…QMAI). Glutamate 202 serves as a coordination point for Zn(2+).

Belongs to the peptidase M48B family. It depends on Zn(2+) as a cofactor.

The protein localises to the cell inner membrane. The polypeptide is Protease HtpX homolog (Burkholderia lata (strain ATCC 17760 / DSM 23089 / LMG 22485 / NCIMB 9086 / R18194 / 383)).